The chain runs to 346 residues: Phenylalanine--tRNA ligase alpha subunit (346 aa).

Residue Glu-259 participates in Mg(2+) binding.

It belongs to the class-II aminoacyl-tRNA synthetase family. Phe-tRNA synthetase alpha subunit type 1 subfamily. In terms of assembly, tetramer of two alpha and two beta subunits. It depends on Mg(2+) as a cofactor.

The protein resides in the cytoplasm. It catalyses the reaction tRNA(Phe) + L-phenylalanine + ATP = L-phenylalanyl-tRNA(Phe) + AMP + diphosphate + H(+). The polypeptide is Phenylalanine--tRNA ligase alpha subunit (Lactococcus lactis subsp. lactis (strain IL1403) (Streptococcus lactis)).